We begin with the raw amino-acid sequence, 325 residues long: ATP phosphoribosyltransferase (325 aa).

The protein belongs to the ATP phosphoribosyltransferase family. Long subfamily. Mg(2+) serves as cofactor.

It is found in the cytoplasm. It catalyses the reaction 1-(5-phospho-beta-D-ribosyl)-ATP + diphosphate = 5-phospho-alpha-D-ribose 1-diphosphate + ATP. Its pathway is amino-acid biosynthesis; L-histidine biosynthesis; L-histidine from 5-phospho-alpha-D-ribose 1-diphosphate: step 1/9. Its activity is regulated as follows. Feedback inhibited by histidine. Its function is as follows. Catalyzes the condensation of ATP and 5-phosphoribose 1-diphosphate to form N'-(5'-phosphoribosyl)-ATP (PR-ATP). Has a crucial role in the pathway because the rate of histidine biosynthesis seems to be controlled primarily by regulation of HisG enzymatic activity. The protein is ATP phosphoribosyltransferase of Rhodopseudomonas palustris (strain HaA2).